A 315-amino-acid polypeptide reads, in one-letter code: Hydroxysteroid 11-beta-dehydrogenase 1-like protein (315 aa).

The signal sequence occupies residues 1–15 (MKVLLLTGLGALFFA). Residues 36-62 (GANA…TAHT), 87-88 (DM), and 114-116 (NHI) contribute to the NADP(+) site. Residue S165 coordinates substrate. The active-site Proton acceptor is the Y178. NADP(+) is bound by residues 178–182 (YSAAK) and 211–217 (GLRDRAS). A disordered region spans residues 221-286 (AVRSSTSRPR…SKTEKNDGHL (66 aa)). The segment covering 277–286 (SKTEKNDGHL) has biased composition (basic and acidic residues).

It belongs to the short-chain dehydrogenases/reductases (SDR) family. As to expression, highly expressed in the brain.

The protein resides in the secreted. It carries out the reaction cortisone + NADPH + H(+) = cortisol + NADP(+). Unidirectional NADP(+)-dependent cortisol dehydrogenase (in vitro). This is Hydroxysteroid 11-beta-dehydrogenase 1-like protein (HSD11B1L) from Homo sapiens (Human).